A 100-amino-acid polypeptide reads, in one-letter code: Urease subunit gamma (100 aa).

Belongs to the urease gamma subunit family. As to quaternary structure, heterotrimer of UreA (gamma), UreB (beta) and UreC (alpha) subunits. Three heterotrimers associate to form the active enzyme.

The protein resides in the cytoplasm. The enzyme catalyses urea + 2 H2O + H(+) = hydrogencarbonate + 2 NH4(+). Its pathway is nitrogen metabolism; urea degradation; CO(2) and NH(3) from urea (urease route): step 1/1. The polypeptide is Urease subunit gamma (Chelativorans sp. (strain BNC1)).